We begin with the raw amino-acid sequence, 505 residues long: Monocarboxylate transporter 6 (505 aa).

Residues 1-17 are Cytoplasmic-facing; the sequence is MPQALERADGSWAWVVL. Residues 18–38 traverse the membrane as a helical segment; the sequence is LATMVTQGLTLGFPTCIGIFF. Over 39-53 the chain is Extracellular; that stretch reads TELQWEFQASNSETS. The helical transmembrane segment at 54 to 74 threads the bilayer; it reads WFPSILTAVLHMAGPLCSILV. The Cytoplasmic segment spans residues 75 to 80; it reads GRFGCR. Residues 81 to 101 traverse the membrane as a helical segment; sequence VTVMLGGVLASLGMVASSFSH. The Extracellular segment spans residues 102–110; the sequence is NLSQLYFTA. A helical transmembrane segment spans residues 111–131; sequence GFITGLGMCFSFQSSITVLGF. Residues 132-137 are Cytoplasmic-facing; sequence YFVRRR. Residues 138–158 traverse the membrane as a helical segment; that stretch reads VLANALASMGVSLGITLWPLL. Topologically, residues 159–171 are extracellular; that stretch reads SRYLLENLGWRGT. A helical membrane pass occupies residues 172–192; sequence FLVFGGIFLHCCICGAIIRPV. At 193–239 the chain is on the cytoplasmic side; it reads ATSVAPETKECPPPPPETPALGCLAACGRTIQRHLAFDILRHNTGYC. A helical transmembrane segment spans residues 240-260; it reads VYILGVMWSVLGFPLPQVFLV. Topologically, residues 261 to 274 are extracellular; that stretch reads PYAMWHSVDEQQAA. The chain crosses the membrane as a helical span at residues 275–295; sequence LLISIIGFSNIFLRPLAGLMA. At 296 to 305 the chain is on the cytoplasmic side; sequence GRPAFASHRK. A helical membrane pass occupies residues 306 to 326; that stretch reads YLFSLALLLNGLTNLVCAASG. Residues 327–329 are Extracellular-facing; that stretch reads DFW. Residues 330–350 form a helical membrane-spanning segment; it reads VLVGYCLAYSVSMSGIGALIF. Over 351–367 the chain is Cytoplasmic; the sequence is QVLMDIVPMDQFPRALG. Residues 368–388 form a helical membrane-spanning segment; sequence LFTVLDGLAFLISPPLAGLLL. Residues 389–396 lie on the Extracellular side of the membrane; the sequence is DATNNFSY. Residues 397-417 form a helical membrane-spanning segment; the sequence is VFYMSSFFLISAALFMGGSFY. The Cytoplasmic portion of the chain corresponds to 418–505; that stretch reads ALQKKEQGKQ…QTALGWNSPT (88 aa). The disordered stretch occupies residues 443-464; that stretch reads KDGPGKQRSPEIMCQSSRQPRP.

This sequence belongs to the major facilitator superfamily. Monocarboxylate porter (TC 2.A.1.13) family. As to expression, highly expressed in kidney.

It is found in the cell membrane. Proton-linked monocarboxylate transporter. Catalyzes the rapid transport across the plasma membrane of many monocarboxylates such as lactate, pyruvate, branched-chain oxo acids derived from leucine, valine and isoleucine, and the ketone bodies acetoacetate, beta-hydroxybutyrate and acetate. In Homo sapiens (Human), this protein is Monocarboxylate transporter 6 (SLC16A5).